A 468-amino-acid chain; its full sequence is Soluble pyridine nucleotide transhydrogenase (468 aa).

An FAD-binding site is contributed by glutamate 38–cysteine 47.

Belongs to the class-I pyridine nucleotide-disulfide oxidoreductase family. Requires FAD as cofactor.

The protein resides in the cytoplasm. The catalysed reaction is NAD(+) + NADPH = NADH + NADP(+). Its function is as follows. Conversion of NADPH, generated by peripheral catabolic pathways, to NADH, which can enter the respiratory chain for energy generation. This is Soluble pyridine nucleotide transhydrogenase from Pectobacterium atrosepticum (strain SCRI 1043 / ATCC BAA-672) (Erwinia carotovora subsp. atroseptica).